The primary structure comprises 341 residues: N-acetyl-gamma-glutamyl-phosphate reductase (341 aa).

Cys145 is an active-site residue.

This sequence belongs to the NAGSA dehydrogenase family. Type 1 subfamily.

The protein resides in the cytoplasm. The enzyme catalyses N-acetyl-L-glutamate 5-semialdehyde + phosphate + NADP(+) = N-acetyl-L-glutamyl 5-phosphate + NADPH + H(+). It functions in the pathway amino-acid biosynthesis; L-arginine biosynthesis; N(2)-acetyl-L-ornithine from L-glutamate: step 3/4. In terms of biological role, catalyzes the NADPH-dependent reduction of N-acetyl-5-glutamyl phosphate to yield N-acetyl-L-glutamate 5-semialdehyde. This Streptomyces clavuligerus protein is N-acetyl-gamma-glutamyl-phosphate reductase.